A 479-amino-acid chain; its full sequence is Neuronal acetylcholine receptor subunit alpha-9 (479 aa).

The signal sequence occupies residues 1 to 22; it reads MNWSHSCISFCWIYFAASRLRA. Residues 23–238 are Extracellular-facing; sequence AETADGKYAQ…FTLLLKRRSS (216 aa). An N-linked (GlcNAc...) asparagine glycan is attached at asparagine 57. Cysteine 155 and cysteine 169 are disulfide-bonded. A glycan (N-linked (GlcNAc...) asparagine) is linked at asparagine 170. Na(+) is bound by residues serine 191 and aspartate 193. Residues cysteine 219 and cysteine 220 are joined by a disulfide bond. Transmembrane regions (helical) follow at residues 239–259, 269–289, and 303–323; these read FYIVNLLIPCVLISFLAPLSF, VSLGVTILLAMTVFQLMVAEI, and YIATMALITASTALTIMVMNI. Residues 324 to 457 lie on the Cytoplasmic side of the membrane; it reads HFCGAEARPV…WKKVAKVIDR (134 aa). A helical membrane pass occupies residues 458–478; that stretch reads FFMWIFFIMVFVMTILIIARA.

It belongs to the ligand-gated ion channel (TC 1.A.9) family. Acetylcholine receptor (TC 1.A.9.1) subfamily. Alpha-9/CHRNA9 sub-subfamily. In terms of assembly, forms homo- or heteropentameric channels in conjunction with CHRNA10. The native outer hair cell receptor is composed of CHRNA9:CHRNA10 heterooligomers. Found in the stoichiometric form (CHRNA9)2:(CHRNA10)3. N-glycosylated. Expressed in cochlea, keratinocytes, pituitary gland, B-cells and T-cells.

Its subcellular location is the synaptic cell membrane. It is found in the cell membrane. The catalysed reaction is Ca(2+)(in) = Ca(2+)(out). It catalyses the reaction K(+)(in) = K(+)(out). It carries out the reaction Na(+)(in) = Na(+)(out). The enzyme catalyses Mg(2+)(in) = Mg(2+)(out). Its activity is regulated as follows. Activated by a myriad of ligands such as acetylcholine. AChR activity is inhibited by the antagonist alpha-conotoxins RgIA and GeXXA, small disulfide-constrained peptides from cone snails. Its function is as follows. Component of neuronal acetylcholine receptors (nAChRs) that function as pentameric, ligand-gated cation channels with high calcium permeability among other activities. nAChRs are excitatory neurotrasnmitter receptors formed by a collection of nAChR subunits known to mediate synaptic transmission in the nervous system and the neuromuscular junction. Each nAchR subunit confers differential attributes to channel properties, including activation, deactivation and desensitization kinetics, pH sensitivity, cation permeability, and binding to allosteric modulators. Forms either homopentamers or heteropentamers with CHRNA10. Expressed in the inner ear, in sympathetic neurons and in other non-neuronal cells, such as skin keratinocytes and lymphocytes. nAChR formed by CHRNA9:CHRNA10 mediate central nervous system control of auditory and vestibular sensory processing. The channel is permeable to a range of divalent cations including calcium, the influx of which may activate a potassium current which hyperpolarizes the cell membrane. In the ear, mediates synaptic transmission between efferent olivocochlear fibers and hair cells of the cochlea, this may lead to a reduction in basilar membrane motion, altering the activity of auditory nerve fibers and reducing the range of dynamic hearing. This may protect against acoustic trauma. May also regulate keratinocyte adhesion. This chain is Neuronal acetylcholine receptor subunit alpha-9, found in Homo sapiens (Human).